A 539-amino-acid chain; its full sequence is Acid-sensing ion channel 4-A (539 aa).

At 1-68 (MPIEFVCKIK…SGRLGVRQTL (68 aa)) the chain is on the cytoplasmic side. Residues 69-89 (WALAFLVSLALFLYQAAKCAI) traverse the membrane as a helical segment. Over 90–432 (SYLEHPHVTA…EQKKAYDVAG (343 aa)) the chain is Extracellular. 2 disulfide bridges follow: C116–C200 and C178–C185. Residues N136, N165, N179, N184, N206, and N241 are each glycosylated (N-linked (GlcNAc...) asparagine). Cystine bridges form between C294-C369, C313-C365, C317-C363, C326-C347, and C328-C340. N370 carries an N-linked (GlcNAc...) asparagine glycan. Residues 433–453 (LLGDIGGQMGLFIGASVLTIL) form a helical membrane-spanning segment. Positions 446-448 (GAS) match the GAS motif; ion selectivity filter motif. Residues 454–539 (EILDYVYEVI…HHRVSEDFAC (86 aa)) lie on the Cytoplasmic side of the membrane. The disordered stretch occupies residues 474-494 (QRDDKKQTQQQQQASTVATVN).

It belongs to the amiloride-sensitive sodium channel (TC 1.A.6) family. ASIC4 subfamily. Homotrimer. Heterotrimer; with other ASIC proteins producing functional channels. In terms of tissue distribution, expressed in central nervous system.

The protein resides in the cell membrane. The enzyme catalyses Na(+)(in) = Na(+)(out). With respect to regulation, inhibited by the diuretic drug amiloride. Functionally, could form pH-gated trimeric sodium channels and function as a postsynaptic excitatory receptors in the nervous system. The protein is Acid-sensing ion channel 4-A of Danio rerio (Zebrafish).